The sequence spans 382 residues: Histone acetyltransferase type B subunit 2 (382 aa).

WD repeat units follow at residues 98-138 (ENNA…RYSH), 141-181 (PHTK…TTFK), 184-224 (IQKD…VVSQ), 228-268 (ESSN…ENSG), and 275-315 (GHSE…EEQQ). The interval 317-321 (EDAED) is interaction with the histone H4 N-terminus. Residues 332 to 372 (GHTAGVSDLSWCPFKDWMIGSVADDNIVHLWEISKKLITNE) form a WD 6 repeat.

It belongs to the WD repeat RBAP46/RBAP48/MSI1 family. Component of the HAT-B complex composed of at least HAT1 and HAT2. The HAT-B complex binds to histone H4 tail.

Its subcellular location is the cytoplasm. The protein localises to the nucleus. Functionally, regulatory subunit of the histone acetylase B (HAT-B) complex. The complex acetylates 'Lys-14' of histone H4 which is required for telomeric silencing. In Candida albicans (strain SC5314 / ATCC MYA-2876) (Yeast), this protein is Histone acetyltransferase type B subunit 2 (HAT2).